The following is a 545-amino-acid chain: CTP synthase (545 aa).

The tract at residues 1–266 (MTTKYIFVTG…DEICVKRFGL (266 aa)) is amidoligase domain. A CTP-binding site is contributed by Ser14. Ser14 lines the UTP pocket. ATP-binding positions include 15–20 (SLGKGI) and Asp72. Residues Asp72 and Glu140 each contribute to the Mg(2+) site. CTP-binding positions include 147 to 149 (DIE), 187 to 192 (KTKPTQ), and Lys223. UTP-binding positions include 187 to 192 (KTKPTQ) and Lys223. Position 239–241 (239–241 (RDV)) interacts with ATP. The Glutamine amidotransferase type-1 domain maps to 291-542 (IIGMVGKYTE…IKSAIDHQQG (252 aa)). Position 352 (Gly352) interacts with L-glutamine. The Nucleophile; for glutamine hydrolysis role is filled by Cys379. L-glutamine is bound by residues 380-383 (LGMQ), Glu403, and Arg470. Residues His515 and Glu517 contribute to the active site.

Belongs to the CTP synthase family. As to quaternary structure, homotetramer.

The enzyme catalyses UTP + L-glutamine + ATP + H2O = CTP + L-glutamate + ADP + phosphate + 2 H(+). The catalysed reaction is L-glutamine + H2O = L-glutamate + NH4(+). It carries out the reaction UTP + NH4(+) + ATP = CTP + ADP + phosphate + 2 H(+). It participates in pyrimidine metabolism; CTP biosynthesis via de novo pathway; CTP from UDP: step 2/2. Its activity is regulated as follows. Allosterically activated by GTP, when glutamine is the substrate; GTP has no effect on the reaction when ammonia is the substrate. The allosteric effector GTP functions by stabilizing the protein conformation that binds the tetrahedral intermediate(s) formed during glutamine hydrolysis. Inhibited by the product CTP, via allosteric rather than competitive inhibition. Its function is as follows. Catalyzes the ATP-dependent amination of UTP to CTP with either L-glutamine or ammonia as the source of nitrogen. Regulates intracellular CTP levels through interactions with the four ribonucleotide triphosphates. The chain is CTP synthase from Psychromonas ingrahamii (strain DSM 17664 / CCUG 51855 / 37).